A 691-amino-acid chain; its full sequence is Calcium-binding and coiled-coil domain-containing protein 1 (691 aa).

Residues 1-30 (MEESPLSRAPSRGGVNFLNVARTYIPNTKV) form a p300 KIX-binding region. Positions 1-190 (MEESPLSRAP…VQELERALAT (190 aa)) are N-terminal AD (CTNNB1 binding site). Serine 4 is modified (phosphoserine). Positions 45–125 (SDWIGIFKVE…FQFREPRPMD (81 aa)) are interaction with GATA1. Coiled coils occupy residues 145–205 (KATV…YKGI), 232–339 (ELED…AELE), and 417–514 (QSVE…ADEK). Residues 501–691 (RKLEARLEKV…FSTQDPFTFE (191 aa)) are C-terminal AD (CTNNB1 binding site); interaction with CCAR1. The segment at 514–606 (KWNEDATTED…SEAEDEKSVL (93 aa)) is disordered. A UBZ1-type zinc finger spans residues 653 to 679 (WKECPICKERFPAESDKDALEDHMDGH). Cysteine 656, cysteine 659, histidine 675, and histidine 679 together coordinate Zn(2+).

This sequence belongs to the CALCOCO family. As to quaternary structure, part of a calphoglin complex consisting of CALCOCO1, PPA1 and PGM. Interacts with the bHLH-PAS domains of GRIP1, AHR and ARNT. Interacts with CTNNB1 via both its N- and C-terminal regions. Interacts with EP300. Interacts with CCAR1 (via N-terminus) and GATA1.

Its subcellular location is the cytoplasm. The protein resides in the nucleus. Functions as a coactivator for aryl hydrocarbon and nuclear receptors (NR). Recruited to promoters through its contact with the N-terminal basic helix-loop-helix-Per-Arnt-Sim (PAS) domain of transcription factors or coactivators, such as NCOA2. During ER-activation acts synergistically in combination with other NCOA2-binding proteins, such as EP300, CREBBP and CARM1. Involved in the transcriptional activation of target genes in the Wnt/CTNNB1 pathway. Functions as a secondary coactivator in LEF1-mediated transcriptional activation via its interaction with CTNNB1. Coactivator function for nuclear receptors and LEF1/CTNNB1 involves differential utilization of two different activation regions. In association with CCAR1 enhances GATA1- and MED1-mediated transcriptional activation from the gamma-globin promoter during erythroid differentiation of K562 erythroleukemia cells. Functionally, seems to enhance inorganic pyrophosphatase thus activating phosphogluomutase (PMG). Probably functions as a component of the calphoglin complex, which is involved in linking cellular metabolism (phosphate and glucose metabolism) with other core functions including protein synthesis and degradation, calcium signaling and cell growth. The chain is Calcium-binding and coiled-coil domain-containing protein 1 (CALCOCO1) from Homo sapiens (Human).